The primary structure comprises 158 residues: Transcription factor BTF3 homolog 4 (158 aa).

Lysine 5 bears the N6-methyllysine mark. One can recognise an NAC-A/B domain in the interval 33-98 (TADDKKLQSS…AEAKPITEML (66 aa)). Position 111 is a phosphothreonine (threonine 111). Residues 122 to 158 (RQVLDSKAPKPEDIDEEDDDVPDLVENFDEASKNEAN) are disordered. Over residues 134-150 (DIDEEDDDVPDLVENFD) the composition is skewed to acidic residues.

The protein belongs to the NAC-beta family.

The polypeptide is Transcription factor BTF3 homolog 4 (BTF3L4) (Homo sapiens (Human)).